A 250-amino-acid polypeptide reads, in one-letter code: 5'-nucleotidase SurE (250 aa).

Residues Asp-9, Asp-10, Ser-40, and Asn-92 each coordinate a divalent metal cation.

The protein belongs to the SurE nucleotidase family. It depends on a divalent metal cation as a cofactor.

It localises to the cytoplasm. It carries out the reaction a ribonucleoside 5'-phosphate + H2O = a ribonucleoside + phosphate. In terms of biological role, nucleotidase that shows phosphatase activity on nucleoside 5'-monophosphates. The sequence is that of 5'-nucleotidase SurE from Shewanella pealeana (strain ATCC 700345 / ANG-SQ1).